Reading from the N-terminus, the 359-residue chain is S-adenosylmethionine:tRNA ribosyltransferase-isomerase (359 aa).

It belongs to the QueA family. Monomer.

Its subcellular location is the cytoplasm. It carries out the reaction 7-aminomethyl-7-carbaguanosine(34) in tRNA + S-adenosyl-L-methionine = epoxyqueuosine(34) in tRNA + adenine + L-methionine + 2 H(+). Its pathway is tRNA modification; tRNA-queuosine biosynthesis. Transfers and isomerizes the ribose moiety from AdoMet to the 7-aminomethyl group of 7-deazaguanine (preQ1-tRNA) to give epoxyqueuosine (oQ-tRNA). This chain is S-adenosylmethionine:tRNA ribosyltransferase-isomerase, found in Synechococcus sp. (strain ATCC 27144 / PCC 6301 / SAUG 1402/1) (Anacystis nidulans).